Consider the following 160-residue polypeptide: Bursicon (160 aa).

Positions 1-20 (MSVLNTFLVIVALILCYVND) are cleaved as a signal peptide. The 94-residue stretch at 38 to 131 (CQECQMTAVI…PLQCMCRPCG (94 aa)) folds into the CTCK domain. Disulfide bonds link Cys-41/Cys-90, Cys-55/Cys-104, Cys-65/Cys-125, Cys-69/Cys-127, and Cys-87/Cys-130.

As to quaternary structure, heterodimer of burs and pburs.

It is found in the secreted. Its function is as follows. Final heterodimeric neurohormone released at the end of the molting cycle, involved in the sclerotization (tanning) of the insect cuticle, melanization and wing spreading. This chain is Bursicon, found in Bombyx mori (Silk moth).